We begin with the raw amino-acid sequence, 238 residues long: Chromosome partition protein MukE (238 aa).

Residues 206-238 are disordered; that stretch reads EESSQSSFDLDENEKLSDISAEEQHELELEGDA. Basic and acidic residues predominate over residues 218 to 238; it reads NEKLSDISAEEQHELELEGDA.

The protein belongs to the MukE family. In terms of assembly, interacts, and probably forms a ternary complex, with MukF and MukB. The complex formation is stimulated by calcium or magnesium.

It localises to the cytoplasm. Its subcellular location is the nucleoid. Functionally, involved in chromosome condensation, segregation and cell cycle progression. May participate in facilitating chromosome segregation by condensation DNA from both sides of a centrally located replisome during cell division. Probably acts via its interaction with MukB and MukF. This Aliivibrio salmonicida (strain LFI1238) (Vibrio salmonicida (strain LFI1238)) protein is Chromosome partition protein MukE.